We begin with the raw amino-acid sequence, 635 residues long: Threonine--tRNA ligase (635 aa).

One can recognise a TGS domain in the interval 1 to 61 (MPVIRLPDGS…TDDADLSIIT (61 aa)). Positions 242–533 (DHRKLGRQLD…LIENYAGAMP (292 aa)) are catalytic. Residues Cys333, His384, and His510 each contribute to the Zn(2+) site.

It belongs to the class-II aminoacyl-tRNA synthetase family. Homodimer. The cofactor is Zn(2+).

Its subcellular location is the cytoplasm. It carries out the reaction tRNA(Thr) + L-threonine + ATP = L-threonyl-tRNA(Thr) + AMP + diphosphate + H(+). Functionally, catalyzes the attachment of threonine to tRNA(Thr) in a two-step reaction: L-threonine is first activated by ATP to form Thr-AMP and then transferred to the acceptor end of tRNA(Thr). Also edits incorrectly charged L-seryl-tRNA(Thr). The protein is Threonine--tRNA ligase of Methylobacillus flagellatus (strain ATCC 51484 / DSM 6875 / VKM B-1610 / KT).